We begin with the raw amino-acid sequence, 183 residues long: Regulatory protein RecX (183 aa).

The segment covering 1–12 (MTSFPHPSTSES) has biased composition (polar residues). Positions 1–26 (MTSFPHPSTSESGPDPDSEPNREEQA) are disordered.

The protein belongs to the RecX family.

It is found in the cytoplasm. Modulates RecA activity. The polypeptide is Regulatory protein RecX (Mycobacterium sp. (strain KMS)).